A 1581-amino-acid polypeptide reads, in one-letter code: ATP-binding cassette sub-family C member 8 (1581 aa).

Residues 1 to 30 (MPLAFCGSENHSAAYRVDQGVLNNGCFVDA) are Extracellular-facing. An intrachain disulfide couples Cys-6 to Cys-26. The N-linked (GlcNAc...) asparagine glycan is linked to Asn-10. A helical membrane pass occupies residues 31–47 (LNVVPHVFLLFITFPIL). Residues 48-72 (FIGWGSQSSKVHIHHSTWLHFPGHN) lie on the Cytoplasmic side of the membrane. Residues 73-89 (LRWILTFMLLFVLVCEI) traverse the membrane as a helical segment. At 90 to 106 (AEGILSDGVTESHHLHL) the chain is on the extracellular side. The chain crosses the membrane as a helical span at residues 107-123 (YMPAGMAFMAAVTSVVY). The Cytoplasmic segment spans residues 124 to 136 (YHNIETSNFPKLL). A helical transmembrane segment spans residues 137–153 (IALLVYWTLAFITKTIK). Topologically, residues 154–169 (FVKFLDHAIGFSQLRF) are extracellular. Residues 170 to 186 (CLTGLLVILYGMLLLVE) form a helical membrane-spanning segment. Residues 187–303 (VNVIRVRRYI…AFGRRLVLSS (117 aa)) lie on the Cytoplasmic side of the membrane. One can recognise an ABC transmembrane type-1 1 domain in the interval 299-602 (LVLSSTFRIL…LSSVVRSTVK (304 aa)). Residues 304 to 319 (TFRILADLLGFAGPLC) traverse the membrane as a helical segment. At 320 to 356 (IFGIVDHLGKENDVFQPKTQFLGVYFVSSQEFLANAY) the chain is on the extracellular side. A helical transmembrane segment spans residues 357–372 (VLAVLLFLALLLQRTF). The Cytoplasmic portion of the chain corresponds to 373 to 438 (LQASYYVAIE…MWFFFLCPNL (66 aa)). A helical membrane pass occupies residues 439–454 (WAMPVQIIVGVILLYY). The Extracellular segment spans residues 455–460 (ILGVSA). A helical membrane pass occupies residues 461–473 (LIGAAVIILLAPV). Over 474–541 (QYFVATKLSQ…SLRAFAIYTS (68 aa)) the chain is Cytoplasmic. A helical membrane pass occupies residues 542 to 557 (ISIFMNTAIPIAAVLI). At 558 to 576 (TFVGHVSFFKEADFSPSVA) the chain is on the extracellular side. Residues 577 to 592 (FASLSLFHILVTPLFL) form a helical membrane-spanning segment. The Cytoplasmic segment spans residues 593–1012 (LSSVVRSTVK…YLSSAGILLL (420 aa)). In terms of domain architecture, ABC transporter 1 spans 679–929 (VQIMGGYFTW…ECQLFEHWKT (251 aa)). ATP-binding residues include Trp-688, Gly-716, Ser-720, and Ser-721. Ser-720 contributes to the Mg(2+) binding site. Gln-774 provides a ligand contact to Mg(2+). Residues 935 to 949 (DQELEKETVTERKAT) are compositionally biased toward basic and acidic residues. A disordered region spans residues 935–987 (DQELEKETVTERKATEPPQGLSRAMSSRDGLLQDEEEEEEEAAESEEDDNLSS). Positions 966–984 (LQDEEEEEEEAAESEEDDN) are enriched in acidic residues. The ABC transmembrane type-1 2 domain maps to 1012-1306 (LSLLVFSQLL…MVRNLADMEL (295 aa)). A helical membrane pass occupies residues 1013-1030 (SLLVFSQLLKHMVLVAID). At 1031 to 1066 (YWLAKWTDSALTLTPAARNCSLSQECTLDQTVYAMV) the chain is on the extracellular side. Residue Asn-1049 is glycosylated (N-linked (GlcNAc...) asparagine). A helical transmembrane segment spans residues 1067-1083 (FTVLCSLGIVLCLVTSV). The Cytoplasmic segment spans residues 1084–1142 (TVEWTGLKVAKRLHRSLLNRIILAPMRFFETTPLGSILNRFSSDCNTIDQHIPSTLECL). Residues 1143–1160 (SRSTLLCVSALAVISYVT) traverse the membrane as a helical segment. A topological domain (extracellular) is located at residue Pro-1161. Residues 1162–1174 (VFLVALLPLAIVC) traverse the membrane as a helical segment. Topologically, residues 1175-1248 (YFIQKYFRVA…FLTAANRWLE (74 aa)) are cytoplasmic. The chain crosses the membrane as a helical span at residues 1249–1264 (VRMEYIGACVVLIAAV). Topologically, residues 1265 to 1280 (TSISNSLHRELSAGLV) are extracellular. Residues 1281-1296 (GLGLTYALMVSNYLNW) form a helical membrane-spanning segment. The Cytoplasmic portion of the chain corresponds to 1297 to 1581 (MVRNLADMEL…VFASFVRADK (285 aa)). An ABC transporter 2 domain is found at 1344 to 1578 (IQIQNLSVRY…KDSVFASFVR (235 aa)). ADP contacts are provided by Thr-1380, Gly-1381, Gly-1383, Lys-1384, Ser-1385, and Ser-1386. Ser-1482 serves as a coordination point for ATP.

This sequence belongs to the ABC transporter superfamily. ABCC family. Conjugate transporter (TC 3.A.1.208) subfamily. In terms of assembly, forms an heterooctamer with KCNJ11; four ABCC8/SUR1 molecules interact with one KCNJ11 homotetramer.

It localises to the cell membrane. Its activity is regulated as follows. KATP channels are regulated by cytoplasmic ATP/ADP ratios; ATP inhibits the channel by closing the pore, while ADP activates the channel. Activated by phosphatidylinositol 4,5-biphosphate (PtdIns(4,5)P2). Its function is as follows. Regulator subunit of pancreatic ATP-sensitive potassium channel (KATP), playing a major role in the regulation of insulin release. In pancreatic cells, it forms KATP channels with KCNJ11; KCNJ11 forms the channel pore while ABCC8 is required for activation and regulation. This Homo sapiens (Human) protein is ATP-binding cassette sub-family C member 8 (ABCC8).